Consider the following 2571-residue polypeptide: Stabilin-1 (2571 aa).

The N-terminal stretch at 1–25 (MAEPRTLLLLCVLVLCLSDSSFIRG) is a signal peptide. The Extracellular portion of the chain corresponds to 26 to 2475 (QTVRSKRCDI…RAVLGSEPPP (2450 aa)). 4 EGF-like domains span residues 111 to 149 (FECP…SVCQ), 157 to 194 (FGPD…PHCD), 196 to 232 (ELPV…NVCL), and 233 to 272 (APDP…KVCL). Disulfide bonds link cysteine 113–cysteine 127, cysteine 121–cysteine 137, cysteine 139–cysteine 148, cysteine 161–cysteine 172, cysteine 165–cysteine 182, cysteine 184–cysteine 193, cysteine 200–cysteine 211, cysteine 205–cysteine 218, cysteine 220–cysteine 231, cysteine 237–cysteine 248, cysteine 242–cysteine 258, and cysteine 260–cysteine 271. 2 N-linked (GlcNAc...) asparagine glycosylation sites follow: asparagine 134 and asparagine 142. N-linked (GlcNAc...) asparagine glycosylation is found at asparagine 287, asparagine 313, asparagine 416, asparagine 607, asparagine 674, asparagine 713, and asparagine 746. FAS1 domains lie at 357–495 (YGHL…TALR) and 507–642 (KKTV…EGIL). The EGF-like 5 domain maps to 729–769 (DCTQCPGGFSNPCYGKGNCSDGVRGNGACLCFPDYKGIACH). Intrachain disulfides connect cysteine 733–cysteine 747, cysteine 741–cysteine 757, and cysteine 759–cysteine 768. Residue asparagine 817 is glycosylated (N-linked (GlcNAc...) asparagine). EGF-like domains are found at residues 819 to 859 (SMGN…NGFS), 862 to 904 (RSNP…RICV), 905 to 947 (AIDE…YECS), and 948 to 987 (PIDP…DGFS). Disulfide bonds link cysteine 823-cysteine 838, cysteine 832-cysteine 847, cysteine 866-cysteine 880, cysteine 874-cysteine 890, cysteine 892-cysteine 903, cysteine 909-cysteine 923, cysteine 917-cysteine 933, cysteine 935-cysteine 946, cysteine 952-cysteine 965, and cysteine 959-cysteine 975. FAS1 domains are found at residues 989-1119 (YGDI…SQVL) and 1129-1254 (GPGL…SGIL). 7 N-linked (GlcNAc...) asparagine glycosylation sites follow: asparagine 1011, asparagine 1088, asparagine 1097, asparagine 1171, asparagine 1179, asparagine 1223, and asparagine 1275. The 66-residue stretch at 1328–1393 (TLCEPCPGGL…CDCDHGLCQE (66 aa)) folds into the Laminin EGF-like 1 domain. Cystine bridges form between cysteine 1333–cysteine 1347, cysteine 1341–cysteine 1357, cysteine 1359–cysteine 1368, cysteine 1380–cysteine 1391, cysteine 1384–cysteine 1401, cysteine 1403–cysteine 1412, cysteine 1421–cysteine 1431, cysteine 1425–cysteine 1441, cysteine 1443–cysteine 1454, cysteine 1460–cysteine 1473, cysteine 1467–cysteine 1483, cysteine 1485–cysteine 1496, cysteine 1502–cysteine 1515, cysteine 1509–cysteine 1525, cysteine 1527–cysteine 1539, cysteine 1545–cysteine 1558, cysteine 1552–cysteine 1568, and cysteine 1570–cysteine 1582. N-linked (GlcNAc...) asparagine glycosylation is present at asparagine 1398. EGF-like domains lie at 1417–1455 (TDHQ…SYCS), 1456–1497 (EVDP…ELCQ), 1498–1540 (EINS…QTCK), and 1541–1583 (LLDP…ITCH). N-linked (GlcNAc...) asparagine glycans are attached at residues asparagine 1450 and asparagine 1472. 2 consecutive FAS1 domains span residues 1583 to 1709 (HGRV…DHVL) and 1725 to 1865 (PQRN…DQLL). N-linked (GlcNAc...) asparagine glycosylation is found at asparagine 1627 and asparagine 1728. A Laminin EGF-like 2 domain is found at 1966–2031 (INCHACPGGP…RCTQHGRCDE (66 aa)). 17 disulfides stabilise this stretch: cysteine 1971/cysteine 1985, cysteine 1979/cysteine 1995, cysteine 1997/cysteine 2006, cysteine 2018/cysteine 2029, cysteine 2023/cysteine 2039, cysteine 2041/cysteine 2050, cysteine 2060/cysteine 2070, cysteine 2064/cysteine 2076, cysteine 2078/cysteine 2089, cysteine 2095/cysteine 2108, cysteine 2102/cysteine 2117, cysteine 2119/cysteine 2130, cysteine 2136/cysteine 2150, cysteine 2144/cysteine 2160, cysteine 2162/cysteine 2173, cysteine 2230/cysteine 2299, and cysteine 2254/cysteine 2275. EGF-like domains lie at 2056–2090 (LQPV…RVCT), 2091–2131 (VADL…WSCR), and 2132–2174 (ARDP…LQCL). A glycan (N-linked (GlcNAc...) asparagine) is linked at asparagine 2107. Positions 2208 to 2301 (GVFHIQATSG…SELWDAYCYR (94 aa)) constitute a Link domain. N-linked (GlcNAc...) asparagine glycosylation is found at asparagine 2261, asparagine 2290, asparagine 2334, asparagine 2347, asparagine 2379, asparagine 2393, asparagine 2400, and asparagine 2424. An FAS1 7 domain is found at 2322 to 2459 (NGKLLDVLAA…GIIHALASPL (138 aa)). Residues 2476–2496 (VALSLGVVVTSGTLLGLVAGA) traverse the membrane as a helical segment. At 2497-2571 (LYLRARGKPP…PDTQRVLKVK (75 aa)) the chain is on the cytoplasmic side.

Interacts with CHID1.

The protein resides in the membrane. In terms of biological role, acts as a scavenger receptor for acetylated low density lipoprotein. Binds to both Gram-positive and Gram-negative bacteria and may play a role in defense against bacterial infection. When inhibited in endothelial tube formation assays, there is a marked decrease in cell-cell interactions, suggesting a role in angiogenesis. Involved in the delivery of newly synthesized CHID1/SI-CLP from the biosynthetic compartment to the endosomal/lysosomal system. The sequence is that of Stabilin-1 (Stab1) from Mus musculus (Mouse).